The primary structure comprises 783 residues: Protein transport protein SEC23 B (783 aa).

Residues cysteine 59, cysteine 62, cysteine 81, and cysteine 84 each contribute to the Zn(2+) site. The zinc finger-like stretch occupies residues 59–84 (CRICTAALNPFARVDFLAKIWICPIC).

This sequence belongs to the SEC23/SEC24 family. SEC23 subfamily. Component of the coat protein complex II (COPII), composed of at least five proteins: the Sec23/24 complex, the Sec13/31 complex and Sar1. Interacts with SEC24A.

It localises to the cytoplasmic vesicle. It is found in the COPII-coated vesicle membrane. Its subcellular location is the endoplasmic reticulum membrane. The protein localises to the membrane. Its function is as follows. Component of the coat protein complex II (COPII) which promotes the formation of transport vesicles from the endoplasmic reticulum (ER). The coat has two main functions, the physical deformation of the endoplasmic reticulum membrane into vesicles and the selection of cargo molecules. The chain is Protein transport protein SEC23 B from Arabidopsis thaliana (Mouse-ear cress).